Consider the following 151-residue polypeptide: ALK and LTK ligand 2 (151 aa).

The first 25 residues, 1 to 25, serve as a signal peptide directing secretion; the sequence is MRVSGRPMLLALLLLLSTVGDPGHA. 2 cysteine pairs are disulfide-bonded: Cys112–Cys148 and Cys126–Cys135.

The protein belongs to the ALKAL family. Homodimer.

Its subcellular location is the secreted. The protein localises to the cell membrane. In terms of biological role, cytokine that acts as a physiological ligand for receptor tyrosine kinases LTK and ALK, leading to their activation. Cytokine-binding is sufficient to activate LTK. In contrast, ALKAL2-driven activation of ALK is coupled with heparin-binding to ALK. Stimulation of ALK signaling is involved in neural development and regulation of energy expenditure. This chain is ALK and LTK ligand 2, found in Rattus norvegicus (Rat).